The chain runs to 701 residues: CRS2-associated factor 1, chloroplastic (701 aa).

The N-terminal 77 residues, 1–77, are a transit peptide targeting the chloroplast; it reads MATSHLTSRS…ENGEPAAGVR (77 aa). 2 CRM domains span residues 183–279 and 301–397; these read EPLT…TRPI and DGLT…LPPL. The segment at 581 to 603 is CRS2 binding; the sequence is GILLLFKQAIDSGMALVLNENEF.

As to quaternary structure, interacts with CRS2 and RNA. Part of large ribonucleo-protein complexes that include group IIB introns, CRS2 and CAF1.

Its subcellular location is the plastid. It localises to the chloroplast stroma. Functionally, required for the splicing of group IIB introns in chloroplasts. Forms splicing particles with CRS2. Interacts with RNA and confers intron specificity of the splicing particles. The sequence is that of CRS2-associated factor 1, chloroplastic from Oryza sativa subsp. japonica (Rice).